Here is a 537-residue protein sequence, read N- to C-terminus: Tyrosine-protein kinase Yes (537 aa).

Basic and acidic residues predominate over residues 1–22; sequence MGCIKSKEDKGPSIKYRTEPKP. The disordered stretch occupies residues 1–60; sequence MGCIKSKEDKGPSIKYRTEPKPDPGSQYGADPTQATQSPGIKGPAPNFNSHSMTPFGGSS. Glycine 2 carries N-myristoyl glycine lipidation. Cysteine 3 carries the S-palmitoyl cysteine; in membrane form lipid modification. The 62-residue stretch at 85 to 146 folds into the SH3 domain; that stretch reads GGVTVFVALY…PSNYVAPADS (62 aa). Residues 152 to 249 enclose the SH2 domain; the sequence is WYFGKMGRKD…GLCYRLTTVC (98 aa). In terms of domain architecture, Protein kinase spans 271–524; the sequence is LRLDVKLGQG…YIQSFLEDYF (254 aa). ATP contacts are provided by residues 277-285 and lysine 299; that span reads LGQGCFGEV. The active-site Proton acceptor is aspartate 390. The residue at position 420 (tyrosine 420) is a Phosphotyrosine; by autocatalysis. Residue tyrosine 531 is modified to Phosphotyrosine; by CSK.

The protein belongs to the protein kinase superfamily. Tyr protein kinase family. SRC subfamily. Post-translationally, autophosphorylated at Tyr-420 inducing activation. Palmitoylation at Cys-3 promotes membrane localization.

Its subcellular location is the cell membrane. The protein localises to the cytoplasm. It is found in the cytoskeleton. It localises to the microtubule organizing center. The protein resides in the centrosome. Its subcellular location is the cytosol. The protein localises to the cell junction. It catalyses the reaction L-tyrosyl-[protein] + ATP = O-phospho-L-tyrosyl-[protein] + ADP + H(+). Its function is as follows. Non-receptor protein tyrosine kinase that is involved in the regulation of cell growth and survival, apoptosis, cell-cell adhesion, cytoskeleton remodeling, differentiation, G2/M progression and cytokinesis. The sequence is that of Tyrosine-protein kinase Yes (yes1) from Xenopus laevis (African clawed frog).